The following is a 739-amino-acid chain: Long-chain-fatty-acid--CoA ligase ACSBG2 (739 aa).

ATP-binding positions include 287-295 (TSGTTGQPK), 478-483 (ELYGMS), aspartate 556, arginine 571, and lysine 684.

Belongs to the ATP-dependent AMP-binding enzyme family. Bubblegum subfamily.

It is found in the cytoplasm. The catalysed reaction is a long-chain fatty acid + ATP + CoA = a long-chain fatty acyl-CoA + AMP + diphosphate. It carries out the reaction (5Z,8Z,11Z,14Z)-eicosatetraenoate + ATP + CoA = (5Z,8Z,11Z,14Z)-eicosatetraenoyl-CoA + AMP + diphosphate. It catalyses the reaction hexadecanoate + ATP + CoA = hexadecanoyl-CoA + AMP + diphosphate. The enzyme catalyses (9Z)-octadecenoate + ATP + CoA = (9Z)-octadecenoyl-CoA + AMP + diphosphate. The catalysed reaction is (9Z,12Z)-octadecadienoate + ATP + CoA = (9Z,12Z)-octadecadienoyl-CoA + AMP + diphosphate. It carries out the reaction tetracosanoate + ATP + CoA = tetracosanoyl-CoA + AMP + diphosphate. Functionally, catalyzes the conversion of fatty acids such as long chain and very long-chain fatty acids to their active form acyl-CoAs for both synthesis of cellular lipids, and degradation via beta-oxidation. Can activate diverse saturated, monosaturated and polyunsaturated fatty acids. In Xenopus laevis (African clawed frog), this protein is Long-chain-fatty-acid--CoA ligase ACSBG2.